Reading from the N-terminus, the 206-residue chain is Small ribosomal subunit protein uS4 (206 aa).

In terms of domain architecture, S4 RNA-binding spans 98–176 (RRLDNVVYRL…APKWLEANRE (79 aa)).

Belongs to the universal ribosomal protein uS4 family. As to quaternary structure, part of the 30S ribosomal subunit. Contacts protein S5. The interaction surface between S4 and S5 is involved in control of translational fidelity.

One of the primary rRNA binding proteins, it binds directly to 16S rRNA where it nucleates assembly of the body of the 30S subunit. Its function is as follows. With S5 and S12 plays an important role in translational accuracy. This Gloeobacter violaceus (strain ATCC 29082 / PCC 7421) protein is Small ribosomal subunit protein uS4.